Reading from the N-terminus, the 240-residue chain is Myogenic factor 6 (240 aa).

The bHLH domain maps to 91-142 (DRRKAATLRERRRLKKINEAFEALKRRTVANPNQRLPKVEILRSAINYIERL).

In terms of assembly, efficient DNA binding requires dimerization with another bHLH protein. Skeletal muscle.

The protein localises to the nucleus. In terms of biological role, involved in muscle differentiation (myogenic factor). Induces fibroblasts to differentiate into myoblasts. Probable sequence specific DNA-binding protein. This chain is Myogenic factor 6 (myf6), found in Xenopus laevis (African clawed frog).